We begin with the raw amino-acid sequence, 306 residues long: Latrophilin receptor-like protein A (306 aa).

Residues 1 to 15 lie on the Extracellular side of the membrane; it reads MPSQLLNTVLSYLTD. Residues 16-36 form a helical membrane-spanning segment; sequence ILLSLSIVGSFLTIFTFMLYP. The Cytoplasmic segment spans residues 37–41; it reads KLRSY. The helical transmembrane segment at 42-62 threads the bilayer; it reads PIKLIIYLCMSIVFSLFFFEI. Over 63-70 the chain is Extracellular; it reads SFRSSNSL. The helical transmembrane segment at 71–91 threads the bilayer; it reads FCIPAAILVHYFFLANFFWTF. Topologically, residues 92 to 113 are cytoplasmic; sequence SVSFNFFQMIVKRNRDSEFYER. A helical transmembrane segment spans residues 114–134; it reads YYHLISWGIPFIIIIFCAAFK. Residues 135 to 152 lie on the Extracellular side of the membrane; it reads KYVDRGGFCYLEDQYSVY. Residues 153–173 traverse the membrane as a helical segment; it reads FGFFMPGVIIVCSNICIYVFV. The Cytoplasmic segment spans residues 174–196; that stretch reads AKEIYKTLRHTPTQKRQTVKEFR. A helical transmembrane segment spans residues 197–217; it reads VYFSIFVSIGSSWIFGFIYMF. The Extracellular segment spans residues 218-222; the sequence is SDSNS. Residues 223–243 traverse the membrane as a helical segment; the sequence is IIGYIFLILFSISTSLQGFFI. The Cytoplasmic segment spans residues 244–306; the sequence is FISYCLNYKV…TTTTTNVYSA (63 aa). Residues 279 to 306 form a disordered region; it reads TTQSGPTGTTDSSSTMTSTTTTTNVYSA.

It belongs to the G-protein coupled receptor 2 family. LN-TM7 subfamily.

The protein resides in the membrane. In Dictyostelium discoideum (Social amoeba), this protein is Latrophilin receptor-like protein A (lrlA).